We begin with the raw amino-acid sequence, 160 residues long: Peptide deformylase 1 (160 aa).

Fe cation-binding residues include C90 and H132. E133 is a catalytic residue. H136 lines the Fe cation pocket.

The protein belongs to the polypeptide deformylase family. It depends on Fe(2+) as a cofactor.

It carries out the reaction N-terminal N-formyl-L-methionyl-[peptide] + H2O = N-terminal L-methionyl-[peptide] + formate. Removes the formyl group from the N-terminal Met of newly synthesized proteins. Requires at least a dipeptide for an efficient rate of reaction. N-terminal L-methionine is a prerequisite for activity but the enzyme has broad specificity at other positions. The protein is Peptide deformylase 1 (defA) of Bacillus subtilis (strain 168).